The chain runs to 444 residues: Pentatricopeptide repeat-containing protein At4g35850, mitochondrial (444 aa).

The transit peptide at 1 to 25 (MKFLMQSISGRNRSLVRALVSRRYF) directs the protein to the mitochondrion. PPR repeat units follow at residues 40-74 (DLSE…GVQP), 75-109 (TADI…GIAP), 110-144 (DVNL…DVKP), 145-179 (NGQT…GVGL), 255-289 (NLTV…GKDT), and 290-325 (DTYC…KIPA).

Belongs to the PPR family. P subfamily.

The protein resides in the mitochondrion. This is Pentatricopeptide repeat-containing protein At4g35850, mitochondrial from Arabidopsis thaliana (Mouse-ear cress).